Consider the following 51-residue polypeptide: Large ribosomal subunit protein eL39 (51 aa).

Belongs to the eukaryotic ribosomal protein eL39 family.

The polypeptide is Large ribosomal subunit protein eL39 (Pyrobaculum neutrophilum (strain DSM 2338 / JCM 9278 / NBRC 100436 / V24Sta) (Thermoproteus neutrophilus)).